The following is a 176-amino-acid chain: Methylmalonyl-CoA epimerase, mitochondrial (176 aa).

Residues 1-36 (MARVLKAAAANAVGLFSRLQAPIPTVRASSTSQPLD) constitute a mitochondrion transit peptide. One can recognise a VOC domain in the interval 47 to 176 (RLNHVAIAVP…GGVLVELEQA (130 aa)). H50 is a Co(2+) binding site. The residue at position 114 (K114) is an N6-succinyllysine. H122 is a Co(2+) binding site. K150 bears the N6-acetyllysine; alternate mark. K150 carries the N6-succinyllysine; alternate modification. E172 provides a ligand contact to Co(2+).

This sequence belongs to the methylmalonyl-CoA epimerase family.

The protein resides in the mitochondrion. It catalyses the reaction (R)-methylmalonyl-CoA = (S)-methylmalonyl-CoA. Its function is as follows. Methylmalonyl-CoA epimerase involved in propionyl-CoA metabolism. The polypeptide is Methylmalonyl-CoA epimerase, mitochondrial (Homo sapiens (Human)).